The chain runs to 204 residues: Ribosome maturation factor RimM (204 aa).

A PRC barrel domain is found at 117–192 (DEDEFFSADL…EVTIDPPDDL (76 aa)).

This sequence belongs to the RimM family. In terms of assembly, binds ribosomal protein uS19.

Its subcellular location is the cytoplasm. In terms of biological role, an accessory protein needed during the final step in the assembly of 30S ribosomal subunit, possibly for assembly of the head region. Essential for efficient processing of 16S rRNA. May be needed both before and after RbfA during the maturation of 16S rRNA. It has affinity for free ribosomal 30S subunits but not for 70S ribosomes. This chain is Ribosome maturation factor RimM, found in Methylobacterium nodulans (strain LMG 21967 / CNCM I-2342 / ORS 2060).